The chain runs to 1071 residues: MPAIMTMLADHAARQLLDFSQKLDINLLDNVVNCLYHGEGAQQRMAQEVLTHLKEHPDAWTRVDTILEFSQNMNTKYYGLQILENVIKTRWKILPRNQCEGIKKYVVGLIIKTSSDPTCVEKEKVYIGKLNMILVQILKQEWPKHWPTFISDIVGASRTSESLCQNNMVILKLLSEEVFDFSSGQITQVKAKHLKDSMCNEFSQIFQLCQFVMENSQNAPLVHATLETLLRFLNWIPLGYIFETKLISTLIYKFLNVPMFRNVSLKCLTEIAGVSVSQYEEQFETLFTLTMMQLKQMLPLNTNIRLAYSNGKDDEQNFIQNLSLFLCTFLKEHGQLLEKRLNLREALMEALHYMLLVSEVEETEIFKICLEYWNHLAAELYRESPFSTSASPLLSGSQHFDIPPRRQLYLTVLSKVRLLMVSRMAKPEEVLVVENDQGEVVREFMKDTDSINLYKNMRETLVYLTHLDYVDTEIIMTKKLQNQVNGTEWSWKNLNTLCWAIGSISGAMHEEDEKRFLVTVIKDLLGLCEQKRGKDNKAIIASNIMYIVGQYPRFLRAHWKFLKTVVNKLFEFMHETHDGVQDMACDTFIKIAQKCRRHFVQVQVGEVMPFIDEILNNINTIICDLQPQQVHTFYEAVGYMIGAQTDQTVQEHLIEKYMLLPNQVWDSIIQQATKNVDILKDPETVKQLGSILKTNVRACKAVGHPFVIQLGRIYLDMLNVYKCLSENISAAIQANGEMVTKQPLIRSMRTVKRETLKLISGWVSRSNDPQMVAENFVPPLLDAVLIDYQRNVPAAREPEVLSTMAIIVNKLGGHITAEIPQIFDAVFECTLNMINKDFEEYPEHRTNFFLLLQAVNSHCFPAFLAIPPAQFKLVLDSIIWAFKHTMRNVADTGLQILFTLLQNVAQEEAAAQSFYQTYFCDILQHIFSVVTDTSHTAGLTMHASILAYMFNLVEEGKISTPLNPGNPVNNQMFIQDYVANLLKSAFPHLQDAQVKLFVTGLFSLNQDIPAFKEHLRDFLVQIKEFAGEDTSDLFLEERETALRQAQEEKHKLQMSVPGILNPHEIPEEMCD.

The 67-residue stretch at 46–112 (AQEVLTHLKE…KKYVVGLIIK (67 aa)) folds into the Importin N-terminal domain. HEAT repeat units follow at residues 217 to 240 (QNAP…PLGY), 241 to 277 (IFET…VSVS), 354 to 472 (MLLV…YVDT), 515 to 553 (RFLV…QYPR), 560 to 597 (KFLK…KCRR), and 602 to 639 (VQVG…AVGY). The tract at residues 327–450 (CTFLKEHGQL…VREFMKDTDS (124 aa)) is necessary for interaction with Ran and nuclear export complex formation. Position 391 is a phosphoserine (Ser391). The interval 411–481 (TVLSKVRLLM…TEIIMTKKLQ (71 aa)) is necessary for interaction with RANBP3. Position 446 is an N6-acetyllysine (Lys446). Thr448 is modified (phosphothreonine). Residue Ser450 is modified to Phosphoserine. Tyr454 carries the post-translational modification Phosphotyrosine. Lys693 carries the post-translational modification N6-acetyllysine. 4 HEAT repeats span residues 775–813 (NFVP…KLGG), 885–916 (TMRN…SFYQ), 917–954 (TYFC…NLVE), and 1002–1039 (FSLN…EERE). Phosphoserine is present on Ser1031.

Belongs to the exportin family. As to quaternary structure, found in a U snRNA export complex with PHAX/RNUXA, NCBP1/CBP80, NCBP2/CBP20, RAN, XPO1 and m7G-capped RNA. Component of a nuclear export receptor complex composed of KPNB1, RAN, SNUPN and XPO1. Found in a trimeric export complex with SNUPN, RAN and XPO1. Found in a nuclear export complex with RANBP3 and RAN. Found in a 60S ribosomal subunit export complex with NMD3, RAN, XPO1. Interacts with DDX3X, NMD3, NUP42, NUP88, NUP214, RANBP3 and TERT. Interacts with NEMF (via its N-terminus). Interacts with the monomeric form of BIRC5/survivin deacetylated at 'Lys-129'. Interacts with SERTAD2; the interaction translocates SERTAD2 out of the nucleus. Interacts with ATF2. Interacts with SLC35G1 and STIM1. Interacts with DCAF8. Interacts with DTNBP1 and the interaction translocates DTNBP1 out of the nucleus. Interacts with CPEB3. Interacts with HAX1. Interacts with BOK; translocates to the cytoplasm. Interacts with HSP90AB1. Interacts with LRPPRC; interacts with LRPPRC alone and also when LRPPRC is in complex with EIF4E and with EIF4E sensitivity element (4ESE)-containing mRNAs to form an EIF4E-dependent mRNA export complex.

It localises to the cytoplasm. The protein resides in the nucleus. Its subcellular location is the nucleoplasm. The protein localises to the cajal body. It is found in the nucleolus. Functionally, mediates the nuclear export of cellular proteins (cargos) bearing a leucine-rich nuclear export signal (NES) and of RNAs. In the nucleus, in association with RANBP3, binds cooperatively to the NES on its target protein and to the GTPase Ran in its active GTP-bound form. Docking of this complex to the nuclear pore complex (NPC) is mediated through binding to nucleoporins. Upon transit of a nuclear export complex into the cytoplasm, disassembling of the complex and hydrolysis of Ran-GTP to Ran-GDP (induced by RANBP1 and RANGAP1, respectively) cause release of the cargo from the export receptor. The directionality of nuclear export is thought to be conferred by an asymmetric distribution of the GTP- and GDP-bound forms of Ran between the cytoplasm and nucleus. Involved in U3 snoRNA transport from Cajal bodies to nucleoli. Binds to late precursor U3 snoRNA bearing a TMG cap. This chain is Exportin-1 (Xpo1), found in Mus musculus (Mouse).